Reading from the N-terminus, the 64-residue chain is Large ribosomal subunit protein bL28 (64 aa).

The protein belongs to the bacterial ribosomal protein bL28 family.

The protein is Large ribosomal subunit protein bL28 of Syntrophobacter fumaroxidans (strain DSM 10017 / MPOB).